The primary structure comprises 300 residues: Bifunctional protein FolD (300 aa).

NADP(+) is bound by residues 169–171 (GRG), serine 196, and isoleucine 237.

It belongs to the tetrahydrofolate dehydrogenase/cyclohydrolase family. Homodimer.

It carries out the reaction (6R)-5,10-methylene-5,6,7,8-tetrahydrofolate + NADP(+) = (6R)-5,10-methenyltetrahydrofolate + NADPH. The enzyme catalyses (6R)-5,10-methenyltetrahydrofolate + H2O = (6R)-10-formyltetrahydrofolate + H(+). Its pathway is one-carbon metabolism; tetrahydrofolate interconversion. In terms of biological role, catalyzes the oxidation of 5,10-methylenetetrahydrofolate to 5,10-methenyltetrahydrofolate and then the hydrolysis of 5,10-methenyltetrahydrofolate to 10-formyltetrahydrofolate. In Clavibacter michiganensis subsp. michiganensis (strain NCPPB 382), this protein is Bifunctional protein FolD.